The primary structure comprises 79 residues: Small ribosomal subunit protein bS16 (79 aa).

Belongs to the bacterial ribosomal protein bS16 family.

In Nitratidesulfovibrio vulgaris (strain DSM 19637 / Miyazaki F) (Desulfovibrio vulgaris), this protein is Small ribosomal subunit protein bS16.